Here is a 257-residue protein sequence, read N- to C-terminus: Zinc transporter ZupT (257 aa).

8 consecutive transmembrane segments (helical) span residues 5–25 (LILT…GVIG), 32–52 (VLAF…LMEM), 61–81 (GMSP…YFAL), 109–129 (AILL…ATYV), 137–157 (LGFG…LAVA), 171–191 (ILWA…TWLI), 195–215 (MISP…MVAL), and 236–256 (GVLC…TAGF). N120 and E123 together coordinate Fe(2+). 2 residues coordinate Zn(2+): E123 and H148. Residues N149, E152, and E181 each coordinate Fe(2+). A Zn(2+)-binding site is contributed by E152.

It belongs to the ZIP transporter (TC 2.A.5) family. ZupT subfamily.

It localises to the cell inner membrane. The catalysed reaction is Zn(2+)(in) = Zn(2+)(out). Functionally, mediates zinc uptake. May also transport other divalent cations. In Enterobacter sp. (strain 638), this protein is Zinc transporter ZupT.